Reading from the N-terminus, the 374-residue chain is Potassium channel subfamily K member 9 (374 aa).

Over 1-8 the chain is Cytoplasmic; the sequence is MKRQNVRT. The helical transmembrane segment at 9-29 threads the bilayer; that stretch reads LSLIICTFTYLLVGAAVFDAL. Residues 30–88 are Extracellular-facing; it reads ESDYEMREEEKLKAEEIRLKGKYNISSEDYRQLELVIMQSEPHRAGVQWKFAGSFYFAI. The N-linked (GlcNAc...) asparagine glycan is linked to Asn53. The pore-forming intramembrane region spans 89-101; sequence TVITTIGYGHAAP. At 102–107 the chain is on the extracellular side; sequence GTDAGK. The helical transmembrane segment at 108–128 threads the bilayer; sequence AFCMFYAVLGIPLTLVMFQSL. Residues 129–158 are Cytoplasmic-facing; that stretch reads GERMNTFVKYLLKRIKKCCGMHSTDVSMEN. A helical transmembrane segment spans residues 159–179; that stretch reads MVTVGFFSCMGTLCIGAAAFS. Residues 180–194 are Extracellular-facing; the sequence is HYEEWSFFQAYYYCF. Residues 195–207 constitute an intramembrane region (pore-forming); the sequence is ITLTTIGFGDYVA. The Extracellular segment spans residues 208–218; it reads LQKNRALQKKP. The chain crosses the membrane as a helical span at residues 219 to 239; it reads LYVAFSFMYILVGLTVIGAFL. Over 240–374 the chain is Cytoplasmic; that stretch reads NLVVLRFLTM…HRLMKRRKSI (135 aa).

Belongs to the two pore domain potassium channel (TC 1.A.1.8) family. As to quaternary structure, homodimer. May form heterodimers with other family members.

Its subcellular location is the cell membrane. Its function is as follows. pH-dependent, voltage-insensitive, background potassium channel protein. The chain is Potassium channel subfamily K member 9 (kcnk9) from Xenopus laevis (African clawed frog).